A 207-amino-acid polypeptide reads, in one-letter code: Holliday junction branch migration complex subunit RuvA (207 aa).

Residues 1 to 63 (MIDSLHGEVL…DDGIDLYAFE (63 aa)) form a domain I region. The domain II stretch occupies residues 64-142 (SDEARQMFAM…VFDSGDSASE (79 aa)). Positions 143–154 (PQSGVGGNSEAE) are flexible linker. A domain III region spans residues 155–207 (VDSGVVGTVTQALVELGFPEKQAEKTATSAAAEGGSVSEILKRALRSMSSERN).

This sequence belongs to the RuvA family. As to quaternary structure, homotetramer. Forms an RuvA(8)-RuvB(12)-Holliday junction (HJ) complex. HJ DNA is sandwiched between 2 RuvA tetramers; dsDNA enters through RuvA and exits via RuvB. An RuvB hexamer assembles on each DNA strand where it exits the tetramer. Each RuvB hexamer is contacted by two RuvA subunits (via domain III) on 2 adjacent RuvB subunits; this complex drives branch migration. In the full resolvosome a probable DNA-RuvA(4)-RuvB(12)-RuvC(2) complex forms which resolves the HJ.

Its subcellular location is the cytoplasm. Its function is as follows. The RuvA-RuvB-RuvC complex processes Holliday junction (HJ) DNA during genetic recombination and DNA repair, while the RuvA-RuvB complex plays an important role in the rescue of blocked DNA replication forks via replication fork reversal (RFR). RuvA specifically binds to HJ cruciform DNA, conferring on it an open structure. The RuvB hexamer acts as an ATP-dependent pump, pulling dsDNA into and through the RuvAB complex. HJ branch migration allows RuvC to scan DNA until it finds its consensus sequence, where it cleaves and resolves the cruciform DNA. The polypeptide is Holliday junction branch migration complex subunit RuvA (Corynebacterium kroppenstedtii (strain DSM 44385 / JCM 11950 / CIP 105744 / CCUG 35717)).